The chain runs to 250 residues: Cytochrome c oxidase subunit 2 (250 aa).

At Met1–Asn39 the chain is on the mitochondrial intermembrane side. The helical transmembrane segment at Ile40–Ile60 threads the bilayer. Over Asn61–Glu81 the chain is Mitochondrial matrix. A helical transmembrane segment spans residues Leu82–Tyr104. Residues Leu105–Gln250 are Mitochondrial intermembrane-facing. 6 residues coordinate Cu cation: His185, Cys220, Glu222, Cys224, His228, and Met231. Residue Glu222 participates in Mg(2+) binding.

This sequence belongs to the cytochrome c oxidase subunit 2 family. In terms of assembly, component of the cytochrome c oxidase (complex IV, CIV), a multisubunit enzyme composed of a catalytic core of 3 subunits and several supernumerary subunits. The complex exists as a monomer or a dimer and forms supercomplexes (SCs) in the inner mitochondrial membrane with ubiquinol-cytochrome c oxidoreductase (cytochrome b-c1 complex, complex III, CIII). Requires Cu cation as cofactor.

Its subcellular location is the mitochondrion inner membrane. It carries out the reaction 4 Fe(II)-[cytochrome c] + O2 + 8 H(+)(in) = 4 Fe(III)-[cytochrome c] + 2 H2O + 4 H(+)(out). Component of the cytochrome c oxidase, the last enzyme in the mitochondrial electron transport chain which drives oxidative phosphorylation. The respiratory chain contains 3 multisubunit complexes succinate dehydrogenase (complex II, CII), ubiquinol-cytochrome c oxidoreductase (cytochrome b-c1 complex, complex III, CIII) and cytochrome c oxidase (complex IV, CIV), that cooperate to transfer electrons derived from NADH and succinate to molecular oxygen, creating an electrochemical gradient over the inner membrane that drives transmembrane transport and the ATP synthase. Cytochrome c oxidase is the component of the respiratory chain that catalyzes the reduction of oxygen to water. Electrons originating from reduced cytochrome c in the intermembrane space (IMS) are transferred via the dinuclear copper A center (CU(A)) of subunit 2 and heme A of subunit 1 to the active site in subunit 1, a binuclear center (BNC) formed by heme A3 and copper B (CU(B)). The BNC reduces molecular oxygen to 2 water molecules using 4 electrons from cytochrome c in the IMS and 4 protons from the mitochondrial matrix. In Podospora anserina (strain S / ATCC MYA-4624 / DSM 980 / FGSC 10383) (Pleurage anserina), this protein is Cytochrome c oxidase subunit 2 (COII).